The primary structure comprises 55 residues: Large ribosomal subunit protein bL33 (55 aa).

The protein belongs to the bacterial ribosomal protein bL33 family.

This Bradyrhizobium sp. (strain BTAi1 / ATCC BAA-1182) protein is Large ribosomal subunit protein bL33.